Here is a 127-residue protein sequence, read N- to C-terminus: Aspartate 1-decarboxylase (127 aa).

Ser25 serves as the catalytic Schiff-base intermediate with substrate; via pyruvic acid. At Ser25 the chain carries Pyruvic acid (Ser). Thr57 is a substrate binding site. The active-site Proton donor is Tyr58. Residue 73–75 participates in substrate binding; the sequence is GAA.

Belongs to the PanD family. In terms of assembly, heterooctamer of four alpha and four beta subunits. It depends on pyruvate as a cofactor. Post-translationally, is synthesized initially as an inactive proenzyme, which is activated by self-cleavage at a specific serine bond to produce a beta-subunit with a hydroxyl group at its C-terminus and an alpha-subunit with a pyruvoyl group at its N-terminus.

Its subcellular location is the cytoplasm. The enzyme catalyses L-aspartate + H(+) = beta-alanine + CO2. It functions in the pathway cofactor biosynthesis; (R)-pantothenate biosynthesis; beta-alanine from L-aspartate: step 1/1. Its function is as follows. Catalyzes the pyruvoyl-dependent decarboxylation of aspartate to produce beta-alanine. This chain is Aspartate 1-decarboxylase, found in Bacillus velezensis (strain DSM 23117 / BGSC 10A6 / LMG 26770 / FZB42) (Bacillus amyloliquefaciens subsp. plantarum).